Reading from the N-terminus, the 127-residue chain is MSNRKPYVREMTRTWWKDDPFYRFYMVREATILPLIFFTICLTFGLGCLVKGPEAWAGWLSFMSNPIVVVLNILALLGSLFHAQTFFSMMPQVMPITIKGKKLDKTIIVLAQWAAVAAISLFVLVLV.

3 helical membrane passes run 30-50 (ATIL…GCLV), 67-87 (IVVV…QTFF), and 107-127 (IIVL…LVLV).

Belongs to the FrdC family. Part of an enzyme complex containing four subunits: a flavoprotein (FrdA), an iron-sulfur protein (FrdB), and two hydrophobic anchor proteins (FrdC and FrdD).

Its subcellular location is the cell inner membrane. In terms of biological role, anchors the catalytic components of the fumarate reductase complex to the cell membrane, binds quinones. The sequence is that of Fumarate reductase subunit C from Photobacterium profundum (strain SS9).